The chain runs to 150 residues: UPF0178 protein PP_5221 (150 aa).

Belongs to the UPF0178 family.

This chain is UPF0178 protein PP_5221, found in Pseudomonas putida (strain ATCC 47054 / DSM 6125 / CFBP 8728 / NCIMB 11950 / KT2440).